Here is a 310-residue protein sequence, read N- to C-terminus: Thioredoxin reductase (310 aa).

Position 34 to 41 (34 to 41 (NGIQPGGQ)) interacts with FAD. A disulfide bridge links Cys135 with Cys138. 281 to 290 (DVQDKIYRQA) provides a ligand contact to FAD.

The protein belongs to the class-II pyridine nucleotide-disulfide oxidoreductase family. Homodimer. FAD serves as cofactor.

The protein resides in the cytoplasm. It carries out the reaction [thioredoxin]-dithiol + NADP(+) = [thioredoxin]-disulfide + NADPH + H(+). The sequence is that of Thioredoxin reductase (trxB) from Rickettsia bellii (strain RML369-C).